We begin with the raw amino-acid sequence, 120 residues long: Immunoglobulin kappa variable 2D-28 (120 aa).

The first 19 residues, 1–19, serve as a signal peptide directing secretion; sequence MRLPAQLLGLLMLWVSGSS. One can recognise an Ig-like domain in the interval 20–120; the sequence is GDIVMTQSPL…YYCMQALQTP (101 aa). The segment at 21 to 43 is framework-1; it reads DIVMTQSPLSLPVTPGEPASISC. Cysteine 43 and cysteine 113 form a disulfide bridge. The segment at 44–59 is complementarity-determining-1; the sequence is RSSQSLLHSNGYNYLD. A framework-2 region spans residues 60-74; the sequence is WYLQKPGQSPQLLIY. The tract at residues 75–81 is complementarity-determining-2; the sequence is LGSNRAS. The segment at 82 to 113 is framework-3; it reads GVPDRFSGSGSGTDFTLKISRVEAEDVGVYYC. The tract at residues 114-120 is complementarity-determining-3; that stretch reads MQALQTP.

Immunoglobulins are composed of two identical heavy chains and two identical light chains; disulfide-linked.

The protein localises to the secreted. It localises to the cell membrane. V region of the variable domain of immunoglobulin light chains that participates in the antigen recognition. Immunoglobulins, also known as antibodies, are membrane-bound or secreted glycoproteins produced by B lymphocytes. In the recognition phase of humoral immunity, the membrane-bound immunoglobulins serve as receptors which, upon binding of a specific antigen, trigger the clonal expansion and differentiation of B lymphocytes into immunoglobulins-secreting plasma cells. Secreted immunoglobulins mediate the effector phase of humoral immunity, which results in the elimination of bound antigens. The antigen binding site is formed by the variable domain of one heavy chain, together with that of its associated light chain. Thus, each immunoglobulin has two antigen binding sites with remarkable affinity for a particular antigen. The variable domains are assembled by a process called V-(D)-J rearrangement and can then be subjected to somatic hypermutations which, after exposure to antigen and selection, allow affinity maturation for a particular antigen. This chain is Immunoglobulin kappa variable 2D-28, found in Homo sapiens (Human).